The chain runs to 653 residues: MRCDRCARDTIHPIESRALDRSRILFLLCCYKRRPRFRFHVHQWWWWVAMEVPELVKLAFARVQRVEPEHVGKIFGVMLLREPDEDELVQLAYGPEATLLAKIEDTKAALTVIYARCSAAAAHGPPGGGGVGVGGGGGYHQQPQQLFSRPPVPACGGVRHHYSPAAAAAAAFGYQVQSPQYWPDSPPAPPTKAAQQEFAPPGLVVDASAEGPYPLRGGQHVLDDNNFGGGYYYPAGEDAFPNGGGGGGGSPARARRSNGLSTRRPCHYFSKGICKNGQNCHYSHHQVYQDALAGAAINGDVYNHQPGGVTPGSLETLEMEITELLNSRRGQPVSIASLPTLYGEKYGKGLQADGYLTESQRHGKAGYSLTRLLSRLNKIRVIERPHGQHSVVLAEDAAKYMDFRGGGGGGGGDTGSVPASSHQIYLTFPAESTFAEDDVANYFGQYGPVRDVRIPCQERRMFGFVSFQSPETVSTILMRRNPHFICGSRVLVKPYREKSKCVDRTCVDNIKSMVPYCPPRFFEFDQELYTAEYDASRLMRKQLAEKREMLLEMERRRATVRRLESMPPQFAYFDCSIEDASPLHSLQDDSKQLDLMNPSLASPDPLEIVSNSQAPPTQAGNIYDDHESNQIELLPESPFAASAPAGNSISTII.

Positions 242–261 are disordered; that stretch reads NGGGGGGGSPARARRSNGLS. The C3H1-type zinc finger occupies 260–287; the sequence is LSTRRPCHYFSKGICKNGQNCHYSHHQV. The 84-residue stretch at 313–396 folds into the HTH OST-type domain; the sequence is SLETLEMEIT…GQHSVVLAED (84 aa). Positions 422 to 497 constitute an RRM domain; that stretch reads HQIYLTFPAE…SRVLVKPYRE (76 aa). The stretch at 537-565 forms a coiled coil; the sequence is RLMRKQLAEKREMLLEMERRRATVRRLES. Residues 598–623 form a disordered region; that stretch reads PSLASPDPLEIVSNSQAPPTQAGNIY. A compositionally biased stretch (polar residues) spans 609-620; sequence VSNSQAPPTQAG.

This is Zinc finger CCCH domain-containing protein 54 from Oryza sativa subsp. japonica (Rice).